A 350-amino-acid chain; its full sequence is S-adenosylmethionine:tRNA ribosyltransferase-isomerase (350 aa).

Belongs to the QueA family. As to quaternary structure, monomer.

It localises to the cytoplasm. It carries out the reaction 7-aminomethyl-7-carbaguanosine(34) in tRNA + S-adenosyl-L-methionine = epoxyqueuosine(34) in tRNA + adenine + L-methionine + 2 H(+). The protein operates within tRNA modification; tRNA-queuosine biosynthesis. Transfers and isomerizes the ribose moiety from AdoMet to the 7-aminomethyl group of 7-deazaguanine (preQ1-tRNA) to give epoxyqueuosine (oQ-tRNA). The sequence is that of S-adenosylmethionine:tRNA ribosyltransferase-isomerase from Bacillus cereus (strain B4264).